The following is a 411-amino-acid chain: 1-deoxy-D-xylulose 5-phosphate reductoisomerase (411 aa).

Residues Thr12, Gly13, Ser14, Ile15, and Asn127 each coordinate NADPH. 1-deoxy-D-xylulose 5-phosphate is bound at residue Lys128. An NADPH-binding site is contributed by Glu129. Asp153 lines the Mn(2+) pocket. Residues Ser154, Glu155, Ser189, and His212 each contribute to the 1-deoxy-D-xylulose 5-phosphate site. Glu155 is a binding site for Mn(2+). Residue Gly218 participates in NADPH binding. Residues Ser225, Asn230, Lys231, and Glu234 each coordinate 1-deoxy-D-xylulose 5-phosphate. Mn(2+) is bound at residue Glu234.

This sequence belongs to the DXR family. The cofactor is Mg(2+). Requires Mn(2+) as cofactor.

The catalysed reaction is 2-C-methyl-D-erythritol 4-phosphate + NADP(+) = 1-deoxy-D-xylulose 5-phosphate + NADPH + H(+). It participates in isoprenoid biosynthesis; isopentenyl diphosphate biosynthesis via DXP pathway; isopentenyl diphosphate from 1-deoxy-D-xylulose 5-phosphate: step 1/6. Catalyzes the NADPH-dependent rearrangement and reduction of 1-deoxy-D-xylulose-5-phosphate (DXP) to 2-C-methyl-D-erythritol 4-phosphate (MEP). The sequence is that of 1-deoxy-D-xylulose 5-phosphate reductoisomerase from Colwellia psychrerythraea (strain 34H / ATCC BAA-681) (Vibrio psychroerythus).